The chain runs to 145 residues: MLNISHYKIIAIGKIRKKWIQEGIEMYLKRLPGLEVKEIKDSTQLKEEHTIKEIISKNEFLVTLNENGQSFTSKQLATKLLNSHNQNITFVIGGASGLTSSLNNLASWQLSLSPLTFPHEIARLLLIEQLYRAKTITQGGPYHKE.

S-adenosyl-L-methionine is bound by residues L64, G93, and 112–117 (LSPLTF).

Belongs to the RNA methyltransferase RlmH family. As to quaternary structure, homodimer.

The protein resides in the cytoplasm. The enzyme catalyses pseudouridine(1915) in 23S rRNA + S-adenosyl-L-methionine = N(3)-methylpseudouridine(1915) in 23S rRNA + S-adenosyl-L-homocysteine + H(+). Specifically methylates the pseudouridine at position 1915 (m3Psi1915) in 23S rRNA. The polypeptide is Ribosomal RNA large subunit methyltransferase H (Prochlorococcus marinus (strain NATL1A)).